A 398-amino-acid polypeptide reads, in one-letter code: Apolipoprotein L1 (398 aa).

The N-terminal stretch at 1-27 (MEGAALLRVSVLCIWMSALFLGVGVRA) is a signal peptide. Positions 35-47 (QQNVPSGTDTGDP) are enriched in polar residues. Residues 35–55 (QQNVPSGTDTGDPQSKPLGDW) form a disordered region. Asn-261 is a glycosylation site (N-linked (GlcNAc...) asparagine). A disordered region spans residues 297–317 (PHASASRPRVTEPISAESGEQ). 2 positions are modified to phosphoserine; by FAM20C: Ser-311 and Ser-314.

The protein belongs to the apolipoprotein L family. As to quaternary structure, in plasma, interacts with APOA1 and mainly associated with large high density lipoprotein particles. Post-translationally, phosphorylated by FAM20C in the extracellular medium. Plasma. Found on APOA-I-containing high density lipoprotein (HDL3). Expressed in pancreas, lung, prostate, liver, placenta and spleen.

The protein localises to the secreted. Functionally, may play a role in lipid exchange and transport throughout the body. May participate in reverse cholesterol transport from peripheral cells to the liver. The chain is Apolipoprotein L1 (APOL1) from Homo sapiens (Human).